The sequence spans 427 residues: Gamma-glutamyl phosphate reductase (427 aa).

The protein belongs to the gamma-glutamyl phosphate reductase family.

The protein localises to the cytoplasm. The catalysed reaction is L-glutamate 5-semialdehyde + phosphate + NADP(+) = L-glutamyl 5-phosphate + NADPH + H(+). The protein operates within amino-acid biosynthesis; L-proline biosynthesis; L-glutamate 5-semialdehyde from L-glutamate: step 2/2. Catalyzes the NADPH-dependent reduction of L-glutamate 5-phosphate into L-glutamate 5-semialdehyde and phosphate. The product spontaneously undergoes cyclization to form 1-pyrroline-5-carboxylate. This Rhizobium rhizogenes (strain K84 / ATCC BAA-868) (Agrobacterium radiobacter) protein is Gamma-glutamyl phosphate reductase.